A 216-amino-acid polypeptide reads, in one-letter code: Ribosomal RNA small subunit methyltransferase G (216 aa).

S-adenosyl-L-methionine contacts are provided by residues G82, L87, 135–136 (AE), and R148.

It belongs to the methyltransferase superfamily. RNA methyltransferase RsmG family.

The protein localises to the cytoplasm. The enzyme catalyses guanosine(527) in 16S rRNA + S-adenosyl-L-methionine = N(7)-methylguanosine(527) in 16S rRNA + S-adenosyl-L-homocysteine. Specifically methylates the N7 position of guanine in position 527 of 16S rRNA. The chain is Ribosomal RNA small subunit methyltransferase G from Caulobacter vibrioides (strain ATCC 19089 / CIP 103742 / CB 15) (Caulobacter crescentus).